A 448-amino-acid polypeptide reads, in one-letter code: Tubulin beta-1 chain (448 aa).

8 residues coordinate GTP: glutamine 11, glutamate 69, serine 138, glycine 142, threonine 143, glycine 144, asparagine 204, and asparagine 226. Glutamate 69 contacts Mg(2+). Positions 428–448 are disordered; it reads AGIGDDEEEDEEGVMGEEIDA. Over residues 430 to 448 the composition is skewed to acidic residues; the sequence is IGDDEEEDEEGVMGEEIDA.

Belongs to the tubulin family. In terms of assembly, dimer of alpha and beta chains. A typical microtubule is a hollow water-filled tube with an outer diameter of 25 nm and an inner diameter of 15 nM. Alpha-beta heterodimers associate head-to-tail to form protofilaments running lengthwise along the microtubule wall with the beta-tubulin subunit facing the microtubule plus end conferring a structural polarity. Microtubules usually have 13 protofilaments but different protofilament numbers can be found in some organisms and specialized cells. It depends on Mg(2+) as a cofactor.

The protein resides in the cytoplasm. The protein localises to the cytoskeleton. In terms of biological role, tubulin is the major constituent of microtubules, a cylinder consisting of laterally associated linear protofilaments composed of alpha- and beta-tubulin heterodimers. Microtubules grow by the addition of GTP-tubulin dimers to the microtubule end, where a stabilizing cap forms. Below the cap, tubulin dimers are in GDP-bound state, owing to GTPase activity of alpha-tubulin. This chain is Tubulin beta-1 chain (TUB-1), found in Echinococcus multilocularis (Fox tapeworm).